Here is an 843-residue protein sequence, read N- to C-terminus: Tetratricopeptide repeat protein 7B (843 aa).

The stretch at 97-131 is one TPR 1 repeat; that stretch reads QESNLVMAKLTYVEGDYKEALNIYARVGLDDLPLT. Ser160 and Ser202 each carry phosphoserine. TPR repeat units lie at residues 219–252, 363–396, 397–430, 479–514, 516–548, and 549–582; these read ETGLQRAHVLYFKNGNLTRGVGRFRELLRAVETR, SVVYDLLTIALGRRGQYEMLSECLERAMKFAFEE, FHLWYQFALSLMAAGKSARAVKVLKECIRLKPDD, TYSLQATDASLRGMQEGLQRKALLAFQRAHSLSPTD, QAAFYLALQLAISRQIPEALGYVRQALQLQGDD, and ANSLHLLALLLSAQKHYHDALNIIDMALSEYPEN. Phosphoserine is present on residues Ser625, Ser629, Ser630, Ser673, Ser677, Ser678, and Ser681. 4 TPR repeats span residues 696–729, 730–763, 765–797, and 798–831; these read AQIWLHAAEVYIGIGKPAEATACTQEAANLFPMS, HNVLYMRGQVAELRGHFDEARRWYEEALSISPTH, KSMQRLALVLHQLGRYSLAEKILRDAVQVNSTA, and HEVWNGLGEVLQAQGNDAAATECFLTALELEASS.

In terms of assembly, component of a phosphatidylinositol 4-kinase (PI4K) complex, composed of PI4KA, EFR3 (EFR3A or EFR3B), TTC7 (TTC7A or TTC7B) and HYCC (HYCC1 or HYCC2). Interacts with PI4KA, interaction is direct. Interacts with EFR3 (EFR3A or EFR3B), interaction is direct. Interacts with HYCC (HYCC1 or HYCC2), interaction is direct. Association with the PI4K complex is strongly reduced by TMEM150A.

Its subcellular location is the cytoplasm. It is found in the cytosol. It localises to the cell membrane. Component of a complex required to localize phosphatidylinositol 4-kinase (PI4K) to the plasma membrane. The complex acts as a regulator of phosphatidylinositol 4-phosphate (PtdIns(4)P) synthesis. In the complex, plays a central role in bridging PI4KA to EFR3B and HYCC1, via direct interactions. This is Tetratricopeptide repeat protein 7B from Mus musculus (Mouse).